A 681-amino-acid chain; its full sequence is MGTLHGEKTMFASPNTFYIDESKLCFNKTHFNREDFNVERFMNLARQKSDLKTIQQDLRLYLKSVQNSMIELINDDYADFVHLSSNLVSLQDSLNKIEQDINRIWDEFKESTRESVGMAERIEQKCDELCSNREKQIEIRDRIYFLVAIEKLSEMLLHPPRKCSALWLQKAASFASELKGSTFPHSEEENAAEKIILSQLEAVLCAEGVRSAAGDCQNLPLIYSILSLTESTHSLTALLVSDLLYAEFVNEKHDESNQLKLLKQVFESVKKMRETWAEKMGTEHFRGNIRRFLDETLLTFILTFIDKCMGAVAVPSDTRLFHECFLLTQEFIDNWPSSHTCRAMLKSIRDKFNLLVYFKLETHRFGKQCDQLMSPEMFAEPETSENRENTPQLHCGVSRAIITAIEHVWSDDVYLPPIVDKLWDFTLKLLLKHFSWSQTMKNYFMEEKRDWTSMVTLRSDTGNLHQLVFDFALESIWGKFHDITVDTAPFGQCLTKHGRSIDSLCVQIDDSIIEMFSEVLHQEIAQVSDVPKQYRWTKKSPPTTHSKYVVTAIEMVENLKEKLCCEEHPHTDEIVRKVNLSAFNYFVGKGNEVLDSVEATGSSLSRFKRKTTTDSGSTVTDDDKIKQQIYHDAKYFLSYAENLVFSQADLTGLQEVVNRFDKDARSAIVQEKNQNEEAGNA.

The protein belongs to the COG2 family. Component of the conserved oligomeric Golgi complex which is composed of eight different subunits and is required for normal Golgi morphology and localization.

It localises to the golgi apparatus membrane. In terms of biological role, required for normal Golgi morphology and function. This is Conserved oligomeric Golgi complex subunit 2 (cogc-2) from Caenorhabditis elegans.